Consider the following 805-residue polypeptide: Centrosomal protein of 85 kDa-like (805 aa).

Disordered stretches follow at residues 1–27 (MWGR…AGPD) and 50–89 (RNNH…LSFK). Ser15 carries the post-translational modification Phosphoserine. The span at 60-74 (ASDSGDTGIGTSCSD) shows a compositional bias: polar residues. Ser207 bears the Phosphoserine mark. Residues 439-682 (SQQGEFEQKL…LENQRQTDET (244 aa)) are a coiled coil.

This sequence belongs to the CEP85 family. In terms of tissue distribution, isoform 1 and isoform 4 are expressed in spleen, lymph, thymus, tonsil and peripheral blood leukocytes, with isoform 1 expressed at higher levels. Isoform 4 is detected in K-562 leukemia cells and in the blood of precursor T lymphoblastic lymphoma (T-ALL) patients.

The protein localises to the cytoplasm. It localises to the cytoskeleton. Its subcellular location is the microtubule organizing center. It is found in the centrosome. Plays an essential role in neuronal cell migration. This chain is Centrosomal protein of 85 kDa-like, found in Homo sapiens (Human).